The chain runs to 383 residues: MGASQKNQELIGGLILFSAALLAIVVNNSPLASYYAMLETINVKLGIENLVIDKNLMHWINDGLMAIYFLYIGLEIKREIIVGTLSKPSNIITPAIAAFAGLAMPSLIYLSINHDIKVINGWAIPSATDIAFTLGILALLGTRVPAKLKLLVITIAIFDDIAAIAIIAIFYTKSLSLLSLSLGTLFILAMIICNRIFKINRSSVYVVLGFFAWFCTIKSGVHATLAGFTTALCIPFRENDKDSPANFMEDSLHPWIIYFILPVFAFANAGISFSGISFSILFEPITLGIILGLFVGKQLGIFSILAVFKKLKWFKLGESFSNLQLYGISLLCGIGFTMSLFIGVLAFNDTHLLNAIKIGVVVGSVLSGFFGYIVLRFIVTNPS.

The next 11 helical transmembrane spans lie at leucine 10–proline 30, leucine 56–isoleucine 76, isoleucine 91–serine 111, glycine 121–glycine 141, leucine 150–phenylalanine 170, serine 174–asparagine 194, valine 206–alanine 226, proline 254–serine 274, glycine 275–valine 295, glycine 327–phenylalanine 347, and alanine 355–leucine 375.

Belongs to the NhaA Na(+)/H(+) (TC 2.A.33) antiporter family.

The protein localises to the cell inner membrane. It carries out the reaction Na(+)(in) + 2 H(+)(out) = Na(+)(out) + 2 H(+)(in). Na(+)/H(+) antiporter that extrudes sodium in exchange for external protons. The chain is Na(+)/H(+) antiporter NhaA from Francisella tularensis subsp. novicida (strain U112).